The chain runs to 589 residues: Protein POF1B (589 aa).

A coiled-coil region spans residues 334–443 (TFSNIREELG…QNLRMQVSET (110 aa)).

In terms of assembly, interacts with nonmuscle actin.

It localises to the cell junction. The protein localises to the tight junction. Its function is as follows. Plays a key role in the organization of epithelial monolayers by regulating the actin cytoskeleton. May be involved in ovary development. The sequence is that of Protein POF1B (POF1B) from Homo sapiens (Human).